Consider the following 411-residue polypeptide: Meiotic driver wtf33 (411 aa).

The disordered stretch occupies residues 1-95; it reads MKNKYYPLRS…ENHSSGTADN (95 aa). Residues 11 to 29 are compositionally biased toward basic and acidic residues; that stretch reads SMDELSTKNDNEIDLEKGP. The span at 57 to 72 shows a compositional bias: polar residues; the sequence is GANNPNLFNTDESTTP. Helical transmembrane passes span 104–124, 137–157, 244–264, 281–301, 303–323, and 336–356; these read AILSFIPIFVLNVSAVCYLTY, WVYFGMWCASCLMILISLWCF, EMMIIIWILWLIICCILFGCV, TISAVLFLIVSSVCIPIWTLW, ALSGMLQVLGIHGIIAVLVNG, and GYEIEGFVLFFTSSALFLYEM.

Belongs to the WTF family. Homomer. Forms protein aggregates. The two isoforms can interact with each other and with themselves. High sequence similarity is required for their interaction.

The protein resides in the spore membrane. It localises to the vacuole membrane. The protein localises to the ascus epiplasm. It is found in the cytoplasm. Its subcellular location is the endoplasmic reticulum membrane. Its function is as follows. Promotes unequal transmission of alleles from the parental zygote to progeny spores by acting as poison/antidote system where the poison and antidote proteins are produced from the same locus; the poison component is trans-acting and targets all spores within an ascus whereas the antidote component is spore-specific, leading to poisoning of all progeny that do not inherit the allele. Functionally, localizes isoform 2 to the vacuole thereby facilitating its degradation. Forms toxic aggregates that disrupt spore maturation. In Schizosaccharomyces kambucha (Fission yeast), this protein is Meiotic driver wtf33.